The primary structure comprises 783 residues: Isoamylase 1, chloroplastic (783 aa).

The N-terminal 43 residues, 1–43 (MDAIKCSSSFLHHTKLNTLFSNHTFPKISAPNFKPLFRPISIS), are a transit peptide targeting the chloroplast. The Nucleophile role is filled by Asp410. Glu466 acts as the Proton donor in catalysis.

This sequence belongs to the glycosyl hydrolase 13 family. As to quaternary structure, associates with ISA2 to form the heteromultimeric complex Iso1 required for amylopectin synthesis.

The protein localises to the plastid. It is found in the chloroplast. The catalysed reaction is Hydrolysis of (1-&gt;6)-alpha-D-glucosidic branch linkages in glycogen, amylopectin and their beta-limit dextrins.. It participates in glycan biosynthesis; starch biosynthesis. Its function is as follows. Involved in the trimming of pre-amylopectin chains. Accelerates the crystallization of nascent amylopectin molecules during starch synthesis. ISA1 and ISA2 work exclusively together as a multimeric holoenzyme. ISA1-ISA2 removes preferentially branches that are very close to other branches. Promotes negative gravitropic responses in shoots by facilitating starch granules (statoliths) formation in hypocotyls. The protein is Isoamylase 1, chloroplastic of Arabidopsis thaliana (Mouse-ear cress).